Reading from the N-terminus, the 199-residue chain is Small ribosomal subunit protein uS14m (199 aa).

The interval 28 to 67 (LSTPAPEPAKPSSEETTESTEPATSVEDAGEPMKEKRITQ) is disordered.

This sequence belongs to the universal ribosomal protein uS14 family. As to quaternary structure, component of the mitochondrial ribosome small subunit (28S) which comprises a 12S rRNA and about 30 distinct proteins. Interacts with LIAT1.

The protein localises to the mitochondrion. This Caenorhabditis elegans protein is Small ribosomal subunit protein uS14m (mrps-14).